The following is a 488-amino-acid chain: Sucrose 6(F)-phosphate phosphorylase (488 aa).

Sucrose 6(F)-phosphate is bound by residues D49, H87, 195–197 (RLD), E238, 295–296 (HD), 342–345 (DVHQ), and R399. Catalysis depends on D197, which acts as the Nucleophile. E238 (proton donor/acceptor) is an active-site residue.

This sequence belongs to the glycosyl hydrolase 13 family. Sucrose phosphorylase subfamily. As to quaternary structure, monomer.

The enzyme catalyses sucrose 6(F)-phosphate + phosphate = beta-D-fructose 6-phosphate + alpha-D-glucose 1-phosphate. Catalyzes the reversible phosphorolysis of sucrose 6(F)-phosphate into alpha-D-glucose 1-phosphate (Glc1P) and D-fructose 6-phosphate. May be involved in a new pathway for the degradation of sucrose, which could become phosphorylated on its fructose moiety during uptake via a PTS system. To a lesser extent, can also reversibly act on sucrose in vitro. Is also able to catalyze transglycosylation reactions in vitro. The chain is Sucrose 6(F)-phosphate phosphorylase from Thermoanaerobacterium thermosaccharolyticum (strain ATCC 7956 / DSM 571 / NCIMB 9385 / NCA 3814 / NCTC 13789 / WDCM 00135 / 2032) (Clostridium thermosaccharolyticum).